A 222-amino-acid polypeptide reads, in one-letter code: Deoxyribose-phosphate aldolase (222 aa).

Asp89 (proton donor/acceptor) is an active-site residue. Lys152 functions as the Schiff-base intermediate with acetaldehyde in the catalytic mechanism. The Proton donor/acceptor role is filled by Lys181.

This sequence belongs to the DeoC/FbaB aldolase family. DeoC type 1 subfamily.

The protein localises to the cytoplasm. It catalyses the reaction 2-deoxy-D-ribose 5-phosphate = D-glyceraldehyde 3-phosphate + acetaldehyde. It functions in the pathway carbohydrate degradation; 2-deoxy-D-ribose 1-phosphate degradation; D-glyceraldehyde 3-phosphate and acetaldehyde from 2-deoxy-alpha-D-ribose 1-phosphate: step 2/2. Catalyzes a reversible aldol reaction between acetaldehyde and D-glyceraldehyde 3-phosphate to generate 2-deoxy-D-ribose 5-phosphate. The chain is Deoxyribose-phosphate aldolase from Clostridium novyi (strain NT).